Consider the following 180-residue polypeptide: Hypoxanthine-guanine phosphoribosyltransferase (180 aa).

Residues lysine 43 and glycine 44 each coordinate diphosphate. 2 residues coordinate Mg(2+): glutamate 99 and aspartate 100. Residue aspartate 103 is the Proton acceptor of the active site. GMP-binding positions include lysine 131, 152–153 (FI), and aspartate 159. Diphosphate is bound at residue arginine 165.

This sequence belongs to the purine/pyrimidine phosphoribosyltransferase family. It depends on Mg(2+) as a cofactor.

Its subcellular location is the cytoplasm. It carries out the reaction IMP + diphosphate = hypoxanthine + 5-phospho-alpha-D-ribose 1-diphosphate. It catalyses the reaction GMP + diphosphate = guanine + 5-phospho-alpha-D-ribose 1-diphosphate. Its pathway is purine metabolism; IMP biosynthesis via salvage pathway; IMP from hypoxanthine: step 1/1. It participates in purine metabolism; GMP biosynthesis via salvage pathway; GMP from guanine: step 1/1. Functionally, purine salvage pathway enzyme that catalyzes the transfer of the ribosyl-5-phosphate group from 5-phospho-alpha-D-ribose 1-diphosphate (PRPP) to the N9 position of the 6-oxopurines hypoxanthine and guanine to form the corresponding ribonucleotides IMP (inosine 5'-monophosphate) and GMP (guanosine 5'-monophosphate), with the release of PPi. The protein is Hypoxanthine-guanine phosphoribosyltransferase (hpt) of Streptococcus agalactiae serotype III (strain NEM316).